Here is a 262-residue protein sequence, read N- to C-terminus: Type II pantothenate kinase (262 aa).

ATP is bound at residue 7–14 (DAGGSLVK). Residue Glu-71 is the Proton acceptor of the active site. Residues Thr-101, 119–123 (GGLLT), and Tyr-135 each bind ATP.

It belongs to the type II pantothenate kinase family. Homodimer.

It localises to the cytoplasm. It catalyses the reaction (R)-pantothenate + ATP = (R)-4'-phosphopantothenate + ADP + H(+). It participates in cofactor biosynthesis; coenzyme A biosynthesis; CoA from (R)-pantothenate: step 1/5. Functionally, catalyzes the phosphorylation of pantothenate (Pan), the first step in CoA biosynthesis. This chain is Type II pantothenate kinase, found in Oceanobacillus iheyensis (strain DSM 14371 / CIP 107618 / JCM 11309 / KCTC 3954 / HTE831).